Here is a 618-residue protein sequence, read N- to C-terminus: Proline--tRNA ligase (618 aa).

The protein belongs to the class-II aminoacyl-tRNA synthetase family. ProS type 1 subfamily. As to quaternary structure, homodimer.

The protein resides in the cytoplasm. It carries out the reaction tRNA(Pro) + L-proline + ATP = L-prolyl-tRNA(Pro) + AMP + diphosphate. Its function is as follows. Catalyzes the attachment of proline to tRNA(Pro) in a two-step reaction: proline is first activated by ATP to form Pro-AMP and then transferred to the acceptor end of tRNA(Pro). As ProRS can inadvertently accommodate and process non-cognate amino acids such as alanine and cysteine, to avoid such errors it has two additional distinct editing activities against alanine. One activity is designated as 'pretransfer' editing and involves the tRNA(Pro)-independent hydrolysis of activated Ala-AMP. The other activity is designated 'posttransfer' editing and involves deacylation of mischarged Ala-tRNA(Pro). The misacylated Cys-tRNA(Pro) is not edited by ProRS. In Streptococcus pyogenes serotype M1, this protein is Proline--tRNA ligase.